The chain runs to 1946 residues: 1,3-beta-glucan synthase component (1946 aa).

2 disordered regions span residues methionine 1–phenylalanine 127 and tyrosine 152–tyrosine 198. Composition is skewed to low complexity over residues glycine 24–glutamine 34, glycine 43–glycine 60, and aspartate 91–tyrosine 109. Over residues glutamine 165–asparagine 180 the composition is skewed to polar residues. 2 N-linked (GlcNAc...) asparagine glycosylation sites follow: asparagine 171 and asparagine 290. Positions lysine 297–threonine 316 are disordered. A run of 6 helical transmembrane segments spans residues tryptophan 489 to phenylalanine 509, phenylalanine 537 to alanine 557, leucine 576 to phenylalanine 596, isoleucine 618 to leucine 638, phenylalanine 675 to leucine 695, and isoleucine 734 to phenylalanine 754. N-linked (GlcNAc...) asparagine glycosylation is found at asparagine 1017 and asparagine 1312. Transmembrane regions (helical) follow at residues asparagine 1356 to leucine 1376, cysteine 1413 to leucine 1433, phenylalanine 1500 to serine 1520, tryptophan 1523 to leucine 1543, and isoleucine 1615 to leucine 1635. N-linked (GlcNAc...) asparagine glycosylation is present at asparagine 1649. 5 helical membrane passes run leucine 1667–glycine 1687, phenylalanine 1703–phenylalanine 1723, leucine 1738–leucine 1758, phenylalanine 1803–isoleucine 1823, and alanine 1864–isoleucine 1884. Asparagine 1918 carries an N-linked (GlcNAc...) asparagine glycan. Residues threonine 1920 to phenylalanine 1946 are disordered. Residues glutamate 1925–alanine 1940 are compositionally biased toward low complexity.

It belongs to the glycosyltransferase 48 family. Component of the 1,3-beta-glucan synthase (GS) complex composed of a catalytic subunit GLS1 and a regulatory subunit RHO1.

The protein localises to the membrane. The protein resides in the cell membrane. It catalyses the reaction [(1-&gt;3)-beta-D-glucosyl](n) + UDP-alpha-D-glucose = [(1-&gt;3)-beta-D-glucosyl](n+1) + UDP + H(+). Activated by iron ions. Inhibited by manganese, copper and zinc ions. Catalytic subunit of the 1,3-beta-glucan synthase (GS). Synthesizes 1,3-beta-glucan, a major structural component of the fungal cell wall. Involved in cell wall synthesis, maintenance and remodeling. This is 1,3-beta-glucan synthase component from Cordyceps militaris (strain CM01) (Caterpillar fungus).